Consider the following 51-residue polypeptide: Large ribosomal subunit protein bL33 (51 aa).

This sequence belongs to the bacterial ribosomal protein bL33 family.

This Francisella philomiragia subsp. philomiragia (strain ATCC 25017 / CCUG 19701 / FSC 153 / O#319-036) protein is Large ribosomal subunit protein bL33.